The chain runs to 203 residues: MKSTIFFALFLVCAFTISYLPSATAQFVLDTDDDPLQNGGTYYMLPVMRGKGGGIEVDSTGKEICPLTVVQSPNELDKGIGLVFTSPLHALFIAERYPLSIKFGSFAVITLCAGMPTEWAIVEREGLQAVKLAARDTVDGWFNIERVSREYNDYKLVFCPQQAEDNKCEDIGIQIDDDGIRRLVLSKNKPLVVQFQKFRSSTA.

Residues 1–25 form the signal peptide; the sequence is MKSTIFFALFLVCAFTISYLPSATA. Cystine bridges form between Cys-65/Cys-112 and Cys-159/Cys-168.

It belongs to the protease inhibitor I3 (leguminous Kunitz-type inhibitor) family. Seed, and at low levels in leaf, root, and stem.

Its function is as follows. Has probably no trypsin inhibitor activity. KTi3 is responsible for most of the Kunitz trypsin inhibitor activity and protein found in soybean seeds. This is Kunitz-type trypsin inhibitor KTI1 (KTI1) from Glycine max (Soybean).